The sequence spans 176 residues: MATATDRAPHQVQVHTPTTQRVDVPRRGYDVSGGGIKTLLPERGPSTSQIIAVLVGVPTGGTLLLLSGLSLLGTIIGLAIATPVFTFFSPVIVPAVVTIGLAVTGILTAGACGLTGLMSLSWMINFIRQVHGTTVPDQLDSVKRRMADMADYVGQKTKDAGQQIQTKAQDVKRSSS.

Ala2 is modified (N-acetylalanine; alternate). Helical transmembrane passes span 50 to 80 (IIAV…GLAI) and 95 to 117 (AVVT…LTGL). The tract at residues 157 to 176 (TKDAGQQIQTKAQDVKRSSS) is disordered.

The protein belongs to the oleosin family. As to quaternary structure, homodimer. Forms oligomers. Expressed in seeds (at protein level). Not expressed in leaves.

It is found in the lipid droplet. The protein localises to the membrane. Functionally, may have a structural role to stabilize the lipid body during desiccation of the seed by preventing coalescence of the oil. Probably interacts with both lipid and phospholipid moieties of lipid bodies. May also provide recognition signals for specific lipase anchorage in lipolysis during seedling growth. This is Oleosin Ara h 14.0101 from Arachis hypogaea (Peanut).